A 471-amino-acid chain; its full sequence is Elongation factor 1-alpha (471 aa).

Positions 10 to 239 (KPRLNACFIG…EALNYQDVPE (230 aa)) constitute a tr-type G domain. The segment at 19–26 (GHVDSGKS) is G1. 19–26 (GHVDSGKS) contributes to the GTP binding site. The interval 75–79 (GITIT) is G2. Residues 96–99 (DCPG) form a G3 region. GTP contacts are provided by residues 96-100 (DCPGH) and 156-159 (NKMD). The interval 156 to 159 (NKMD) is G4. The segment at 196–198 (SAF) is G5.

Belongs to the TRAFAC class translation factor GTPase superfamily. Classic translation factor GTPase family. EF-Tu/EF-1A subfamily. As to quaternary structure, component of the eukaryotic elongation factor 1 complex (eEF1).

It is found in the cytoplasm. It functions in the pathway protein biosynthesis; polypeptide chain elongation. GTP-binding component of the eukaryotic elongation factor 1 complex (eEF1). In its active GTP-bound form, binds to and delivers aminoacyl-tRNA to the A-site of ribosomes during protein biosynthesis. In the presence of a correct codon-anticodon match between the aminoacyl-tRNA and the A-site codon of the ribosome-bound mRNA, the ribosome acts as a GTPase activator and the GTP is hydrolyzed. The inactive GDP-bound form leaves the ribosome and must be recycled by its guanine nucleotide exchange factor (GEF) (eEF1B subcomplex) before binding another molecule of aminoacyl-tRNA. Required for nuclear export of aminoacyl-tRNAs. May also be involved in translational quality control by targeting cotranslationally damaged proteins to the proteasome. This chain is Elongation factor 1-alpha (TEF1), found in Encephalitozoon cuniculi (strain GB-M1) (Microsporidian parasite).